The sequence spans 309 residues: tRNA pseudouridine synthase B (309 aa).

Aspartate 39 (nucleophile) is an active-site residue.

This sequence belongs to the pseudouridine synthase TruB family. Type 1 subfamily.

It carries out the reaction uridine(55) in tRNA = pseudouridine(55) in tRNA. Responsible for synthesis of pseudouridine from uracil-55 in the psi GC loop of transfer RNAs. This is tRNA pseudouridine synthase B from Bacillus licheniformis (strain ATCC 14580 / DSM 13 / JCM 2505 / CCUG 7422 / NBRC 12200 / NCIMB 9375 / NCTC 10341 / NRRL NRS-1264 / Gibson 46).